We begin with the raw amino-acid sequence, 295 residues long: Bifunctional protein FolD (295 aa).

Residues 166 to 168 (GRS), serine 195, and isoleucine 236 each bind NADP(+).

It belongs to the tetrahydrofolate dehydrogenase/cyclohydrolase family. In terms of assembly, homodimer.

It carries out the reaction (6R)-5,10-methylene-5,6,7,8-tetrahydrofolate + NADP(+) = (6R)-5,10-methenyltetrahydrofolate + NADPH. The catalysed reaction is (6R)-5,10-methenyltetrahydrofolate + H2O = (6R)-10-formyltetrahydrofolate + H(+). It participates in one-carbon metabolism; tetrahydrofolate interconversion. Functionally, catalyzes the oxidation of 5,10-methylenetetrahydrofolate to 5,10-methenyltetrahydrofolate and then the hydrolysis of 5,10-methenyltetrahydrofolate to 10-formyltetrahydrofolate. The sequence is that of Bifunctional protein FolD from Chlorobium chlorochromatii (strain CaD3).